The primary structure comprises 473 residues: Mitochondrial distribution and morphology protein 10 (473 aa).

It belongs to the MDM10 family. As to quaternary structure, component of the ER-mitochondria encounter structure (ERMES) or MDM complex, composed of MMM1, MDM10, MDM12 and MDM34. Associates with the mitochondrial outer membrane sorting assembly machinery SAM(core) complex.

Its subcellular location is the mitochondrion outer membrane. In terms of biological role, component of the ERMES/MDM complex, which serves as a molecular tether to connect the endoplasmic reticulum and mitochondria. Components of this complex are involved in the control of mitochondrial shape and protein biogenesis and may function in phospholipid exchange. MDM10 is involved in the late assembly steps of the general translocase of the mitochondrial outer membrane (TOM complex). Functions in the TOM40-specific route of the assembly of outer membrane beta-barrel proteins, including the association of TOM40 with the receptor TOM22 and small TOM proteins. Can associate with the SAM(core) complex as well as the MDM12-MMM1 complex, both involved in late steps of the major beta-barrel assembly pathway, that is responsible for biogenesis of all outer membrane beta-barrel proteins. May act as a switch that shuttles between both complexes and channels precursor proteins into the TOM40-specific pathway. Plays a role in mitochondrial morphology and in the inheritance of mitochondria. The protein is Mitochondrial distribution and morphology protein 10 of Candida albicans (strain WO-1) (Yeast).